The sequence spans 484 residues: Zinc metalloproteinase homolog-disintegrin albolatin (484 aa).

The N-terminal stretch at 1-20 is a signal peptide; that stretch reads MIQVLLVTICLAVFPYQGSS. A propeptide spanning residues 21-191 is cleaved from the precursor; it reads IILESGNVND…KTSQLNLPLL (171 aa). N-linked (GlcNAc...) asparagine glycosylation is found at Asn80, Asn251, and Asn301. A Peptidase M12B domain is found at 194-392; the sequence is RCIELVMVAD…WTSYCLYNEP (199 aa). Cystine bridges form between Cys305–Cys387, Cys345–Cys369, Cys347–Cys352, Cys403–Cys422, Cys414–Cys432, Cys416–Cys427, Cys426–Cys449, Cys440–Cys446, Cys445–Cys470, and Cys458–Cys477. A Disintegrin domain is found at 400–484; the sequence is PPVCGNYYLE…GDCPWIGYYG (85 aa). The Cell attachment site; atypical (KGD) motif lies at 462 to 464; the sequence is KGD.

It belongs to the venom metalloproteinase (M12B) family. P-II subfamily. P-IIb sub-subfamily. In terms of assembly, homodimer; disulfide-linked (disintegrin). Expressed by the venom gland.

Its subcellular location is the secreted. The function of this complete protein has not been studied, but it may be similar to the function of the disintegrin domain. A recombinant protein of this domain (409-484) inhibits collagen-induced human platelet aggregation, without having effect on ADP-induced aggregation. It may act either by blocking the binding of fibrinogen to the platelet receptor GPIIb/GPIIIa (ITGA2B/ITGB3) or by blocking the binding of collagen to the integrin alpha-2/beta-1 complex (ITGA2/ITGB1). In Trimeresurus albolabris (White-lipped pit viper), this protein is Zinc metalloproteinase homolog-disintegrin albolatin.